The chain runs to 190 residues: GTP cyclohydrolase 1 (190 aa).

Positions 80, 83, and 151 each coordinate Zn(2+).

It belongs to the GTP cyclohydrolase I family. Toroid-shaped homodecamer, composed of two pentamers of five dimers.

The enzyme catalyses GTP + H2O = 7,8-dihydroneopterin 3'-triphosphate + formate + H(+). It participates in cofactor biosynthesis; 7,8-dihydroneopterin triphosphate biosynthesis; 7,8-dihydroneopterin triphosphate from GTP: step 1/1. The polypeptide is GTP cyclohydrolase 1 (Rickettsia felis (strain ATCC VR-1525 / URRWXCal2) (Rickettsia azadi)).